We begin with the raw amino-acid sequence, 221 residues long: MMKIQQLLEAGVHLGHQAKRWNPKMLPYLYTQRMGIHIIDLVQTAHLLNQACETLTVQVSEGKRVLFVGTKPQASVVVEEEATRCGEFFINQRWLGGLLTNWTTVQSRLKRWRELLEADMDHLTKKEASALRRELNQLNRQMRGIQNMDQIPDIVIVVDPNKENTAVLECHKLGILTIGIVDTNADPESVDLAIPANDDAIASLQLILSCLADAILKGKSI.

Belongs to the universal ribosomal protein uS2 family.

It localises to the plastid. Its subcellular location is the chloroplast. This chain is Small ribosomal subunit protein uS2c (rps2), found in Cyanidioschyzon merolae (strain NIES-3377 / 10D) (Unicellular red alga).